Reading from the N-terminus, the 149-residue chain is Nucleoside diphosphate kinase (149 aa).

The ATP site is built by lysine 9, phenylalanine 57, arginine 85, threonine 91, arginine 102, and asparagine 112. Residue histidine 115 is the Pros-phosphohistidine intermediate of the active site.

It belongs to the NDK family. In terms of assembly, homotetramer. Mg(2+) is required as a cofactor.

Its subcellular location is the cytoplasm. It carries out the reaction dZDP + ATP = dZTP + ADP. The catalysed reaction is a 2'-deoxyribonucleoside 5'-diphosphate + ATP = a 2'-deoxyribonucleoside 5'-triphosphate + ADP. It catalyses the reaction a ribonucleoside 5'-diphosphate + ATP = a ribonucleoside 5'-triphosphate + ADP. The protein operates within purine metabolism. Functionally, major role in the synthesis of nucleoside triphosphates other than ATP. The ATP gamma phosphate is transferred to the NDP beta phosphate via a ping-pong mechanism, using a phosphorylated active-site intermediate. In terms of biological role, (Microbial infection) Catalyzes the phosphorylation of dZDP to dZTP, when the bacterium is infected by a phage that produces the substrate for the synthesis of dZTP (2- amino-2'-deoxyadenosine 5'-triphosphate), which is then used by the phage as a DNA polymerase substrate. This chain is Nucleoside diphosphate kinase, found in Synechococcus elongatus (strain ATCC 33912 / PCC 7942 / FACHB-805) (Anacystis nidulans R2).